A 299-amino-acid polypeptide reads, in one-letter code: Putative hydrolase YtaP (299 aa).

It belongs to the dienelactone hydrolase family.

In Bacillus subtilis (strain 168), this protein is Putative hydrolase YtaP (ytaP).